Reading from the N-terminus, the 257-residue chain is Methylthioribulose-1-phosphate dehydratase (257 aa).

Cysteine 107 serves as a coordination point for substrate. Residues histidine 125 and histidine 127 each contribute to the Zn(2+) site. The active-site Proton donor/acceptor is the glutamate 148. Histidine 210 contacts Zn(2+).

This sequence belongs to the aldolase class II family. MtnB subfamily. Requires Zn(2+) as cofactor.

The protein localises to the cytoplasm. The enzyme catalyses 5-(methylsulfanyl)-D-ribulose 1-phosphate = 5-methylsulfanyl-2,3-dioxopentyl phosphate + H2O. Its pathway is amino-acid biosynthesis; L-methionine biosynthesis via salvage pathway; L-methionine from S-methyl-5-thio-alpha-D-ribose 1-phosphate: step 2/6. Its function is as follows. Catalyzes the dehydration of methylthioribulose-1-phosphate (MTRu-1-P) into 2,3-diketo-5-methylthiopentyl-1-phosphate (DK-MTP-1-P). This Lachancea thermotolerans (strain ATCC 56472 / CBS 6340 / NRRL Y-8284) (Yeast) protein is Methylthioribulose-1-phosphate dehydratase.